The following is a 296-amino-acid chain: N-acetylmuramic acid 6-phosphate etherase 2 (296 aa).

The SIS domain occupies 55–218; sequence IVANFKAGGR…STASMVGIGK (164 aa). Glu83 functions as the Proton donor in the catalytic mechanism. Glu114 is an active-site residue.

Belongs to the GCKR-like family. MurNAc-6-P etherase subfamily. In terms of assembly, homodimer.

It catalyses the reaction N-acetyl-D-muramate 6-phosphate + H2O = N-acetyl-D-glucosamine 6-phosphate + (R)-lactate. The protein operates within amino-sugar metabolism; N-acetylmuramate degradation. Its function is as follows. Specifically catalyzes the cleavage of the D-lactyl ether substituent of MurNAc 6-phosphate, producing GlcNAc 6-phosphate and D-lactate. The protein is N-acetylmuramic acid 6-phosphate etherase 2 of Lactiplantibacillus plantarum (strain ATCC BAA-793 / NCIMB 8826 / WCFS1) (Lactobacillus plantarum).